Consider the following 225-residue polypeptide: Putative 5'-nucleotidase alr3139 (225 aa).

The a divalent metal cation site is built by Asp8, Asp9, Ser37, and Asn88.

This sequence belongs to the SurE nucleotidase family. A divalent metal cation is required as a cofactor.

Its subcellular location is the cytoplasm. It catalyses the reaction a ribonucleoside 5'-phosphate + H2O = a ribonucleoside + phosphate. In terms of biological role, nucleotidase that shows phosphatase activity on nucleoside 5'-monophosphates. This is Putative 5'-nucleotidase alr3139 from Synechocystis sp. (strain ATCC 27184 / PCC 6803 / Kazusa).